A 502-amino-acid chain; its full sequence is MSIQECPESPMLEGEEGRGVERDSDRDSAVDSASEISDGGRTGEKEEGIGICLPREKGDLMHNHFEISDQSALSSASLNEEQFEDYGEGEDGDCTTSSPCPDDEIRINGCSDLGSSVSSSAGQTPRKIHNVDDQMEVFCSQCCKRVSLLSDLENRLKNLKTSSPNRKISSTAFGRKLLHNSNISSSNGSTEDLFHDSTDSSDLDITEKVSYLDKKVTELENEILMSGDVKTKLKQENIQLVHRIHELEEQLKDQETRAEKIMEDELRRHRDAYIRLEKDKNTQIELLRNRLHQLEDENGKMAMNMNRLKSQTEKLDEEKQRMTDKLEDTSLRLKDEMDLYKKMMDKLRQNRQEFQRERDTMQELIEDLRRELEHLQLYKLEAERAGRGRRSSISLSEYSSRTRESELEQEVRRLKQDNQKLREQNEDLNGQLLSLSLHEAKNLFATQTKAQSLAMEIDHASRDQLLEALKQQEEINLRLRQYMDKIILSILDHNPSILEIKN.

Disordered regions lie at residues 1–49 (MSIQ…EEGI) and 71–98 (SALS…TTSS). A compositionally biased stretch (basic and acidic residues) spans 15–29 (EEGRGVERDSDRDSA). Residues 71–80 (SALSSASLNE) show a composition bias toward polar residues. A compositionally biased stretch (acidic residues) spans 81–93 (EQFEDYGEGEDGD). A coiled-coil region spans residues 228–482 (DVKTKLKQEN…EEINLRLRQY (255 aa)). One can recognise an FIP-RBD domain in the interval 439–501 (EAKNLFATQT…DHNPSILEIK (63 aa)).

In terms of assembly, homodimer. Forms a complex with Rab11 (rab11a or rab11b) and arf6.

The protein resides in the recycling endosome membrane. Its subcellular location is the cleavage furrow. It localises to the midbody. The protein localises to the cytoplasmic vesicle. Functionally, acts as a regulator of endocytic traffic by participating in membrane delivery. Required for the abscission step in cytokinesis, possibly by acting as an 'address tag' delivering recycling endosome membranes to the cleavage furrow during late cytokinesis. This chain is Rab11 family-interacting protein 4B (rab11fip4b), found in Danio rerio (Zebrafish).